A 661-amino-acid polypeptide reads, in one-letter code: UvrABC system protein B (661 aa).

The Helicase ATP-binding domain occupies 28–414 (DGVNEGKRHQ…HTDEMVEQII (387 aa)). 41-48 (GATGTGKT) serves as a coordination point for ATP. Residues 94 to 117 (YYDYYQPEAYVPSTDTFIEKDASI) carry the Beta-hairpin motif. One can recognise a Helicase C-terminal domain in the interval 432 to 598 (QIDDLLSEIQ…TINKKIHDVI (167 aa)). The interval 603-624 (ESDETNQQQQTELPKKMTKKER) is disordered. The UVR domain occupies 625-660 (QKTIENIEKEMKKAAKDLDFEKATELRDMLFELKAE).

This sequence belongs to the UvrB family. As to quaternary structure, forms a heterotetramer with UvrA during the search for lesions. Interacts with UvrC in an incision complex.

It localises to the cytoplasm. In terms of biological role, the UvrABC repair system catalyzes the recognition and processing of DNA lesions. A damage recognition complex composed of 2 UvrA and 2 UvrB subunits scans DNA for abnormalities. Upon binding of the UvrA(2)B(2) complex to a putative damaged site, the DNA wraps around one UvrB monomer. DNA wrap is dependent on ATP binding by UvrB and probably causes local melting of the DNA helix, facilitating insertion of UvrB beta-hairpin between the DNA strands. Then UvrB probes one DNA strand for the presence of a lesion. If a lesion is found the UvrA subunits dissociate and the UvrB-DNA preincision complex is formed. This complex is subsequently bound by UvrC and the second UvrB is released. If no lesion is found, the DNA wraps around the other UvrB subunit that will check the other stand for damage. This is UvrABC system protein B from Staphylococcus epidermidis (strain ATCC 35984 / DSM 28319 / BCRC 17069 / CCUG 31568 / BM 3577 / RP62A).